Consider the following 378-residue polypeptide: Zinc transporter 7 (378 aa).

The Cytoplasmic segment spans residues 1–37 (MLPLSIKDDEYKPPRLNLFRKMSGWFRSILADKTSRN). A helical membrane pass occupies residues 38–58 (LFFFLCLNLSFAFVELLYGVW). Residues 59–67 (SNSLGLISD) are Lumenal-facing. Residues 68-88 (SFHMFFDCTALLAGLAASVIS) traverse the membrane as a helical segment. At 89–102 (KWRSNDAFSYGYVR) the chain is on the cytoplasmic side. The chain crosses the membrane as a helical span at residues 103–123 (AEVLAGFVNGLFLIFTAFFIF). Residues 124-140 (SEGVERALEPPDVHHER) lie on the Lumenal side of the membrane. The chain crosses the membrane as a helical span at residues 141–161 (LLPVSILGFIVNLIGIFVFQH). The his-rich loop stretch occupies residues 161–223 (HGGHGHSHGS…HGQDYCHDDH (63 aa)). Topologically, residues 162 to 238 (GGHGHSHGSG…TGSSKQILQG (77 aa)) are cytoplasmic. The segment at 185-214 (HGHSHRGHGHSHEHKHGHTHDHGHSHGLSH) is disordered. A compositionally biased stretch (basic residues) spans 186 to 211 (GHSHRGHGHSHEHKHGHTHDHGHSHG). Residues 239-259 (VFLHIVADTLGSIGVIISAIL) form a helical membrane-spanning segment. At 260–264 (MQNYG) the chain is on the lumenal side. The chain crosses the membrane as a helical span at residues 265–285 (LMIADPICSMLIALLIGVSIV). Topologically, residues 286 to 378 (PLLKESIGIL…LYIQIDVAAM (93 aa)) are cytoplasmic.

It belongs to the cation diffusion facilitator (CDF) transporter (TC 2.A.4) family. SLC30A subfamily. As to quaternary structure, homooligomer.

Its subcellular location is the golgi apparatus membrane. The protein localises to the cytoplasmic vesicle. The protein resides in the golgi apparatus. It is found in the trans-Golgi network. It localises to the sarcoplasmic reticulum. Its subcellular location is the mitochondrion. It carries out the reaction Zn(2+)(in) = Zn(2+)(out). Its function is as follows. Zinc ion transporter mediating zinc entry from the cytosol into the lumen of organelles along the secretory pathway. By contributing to zinc ion homeostasis within the early secretory pathway, regulates the activation and folding of enzymes like alkaline phosphatases. This Gallus gallus (Chicken) protein is Zinc transporter 7 (SLC30A7).